Here is a 326-residue protein sequence, read N- to C-terminus: Probable oxidoreductase patJ (326 aa).

Residues His-287–Lys-326 form a disordered region. Over residues Gly-292–Val-304 the composition is skewed to polar residues.

It belongs to the oxidoreductase OpS7 family.

The protein resides in the vacuole lumen. It is found in the cytoplasmic vesicle lumen. The protein operates within mycotoxin biosynthesis; patulin biosynthesis. Probable oxidoreductase; part of the gene cluster that mediates the biosynthesis of patulin, an acetate-derived tetraketide mycotoxin produced by several fungal species that shows antimicrobial properties against several bacteria. PatJ acts with patO in the vacuole to convert gentisyl alcohol to isoepoxydon. The pathway begins with the synthesis of 6-methylsalicylic acid by the polyketide synthase (PKS) patK via condensation of acetate and malonate units. The 6-methylsalicylic acid decarboxylase patG then catalyzes the decarboxylation of 6-methylsalicylic acid to yield m-cresol (also known as 3-methylphenol). These first reactions occur in the cytosol. The intermediate m-cresol is then transported into the endoplasmic reticulum where the cytochrome P450 monooxygenase patH converts it to m-hydroxybenzyl alcohol, which is further converted to gentisyl alcohol by the cytochrome P450 monooxygenase patI. The oxidoreductases patJ and patO further convert gentisyl alcohol to isoepoxydon in the vacuole. PatN catalyzes then the transformation of isoepoxydon into phyllostine. The cluster protein patF is responsible for the conversion from phyllostine to neopatulin whereas the alcohol dehydrogenase patD converts neopatulin to E-ascladiol. The steps between isoepoxydon and E-ascladiol occur in the cytosol, and E-ascladiol is probably secreted to the extracellular space by one of the cluster-specific transporters patC or patM. Finally, the secreted patulin synthase patE catalyzes the conversion of E-ascladiol to patulin. This Penicillium expansum (Blue mold rot fungus) protein is Probable oxidoreductase patJ.